The following is a 481-amino-acid chain: UDP-N-acetylmuramoyl-L-alanyl-D-glutamate--L-lysine ligase (481 aa).

Residue Ser-42 coordinates UDP-N-acetyl-alpha-D-muramoyl-L-alanyl-D-glutamate. 118–124 lines the ATP pocket; it reads GTKGKTT. Residues Asn-158, 160–161, Ser-187, and Arg-195 contribute to the UDP-N-acetyl-alpha-D-muramoyl-L-alanyl-D-glutamate site; that span reads TT. Lys-229 carries the post-translational modification N6-carboxylysine. The short motif at 404-407 is the L-lysine recognition motif element; sequence DDPN.

The protein belongs to the MurCDEF family. MurE subfamily. Post-translationally, carboxylation is probably crucial for Mg(2+) binding and, consequently, for the gamma-phosphate positioning of ATP.

The protein resides in the cytoplasm. It carries out the reaction UDP-N-acetyl-alpha-D-muramoyl-L-alanyl-D-glutamate + L-lysine + ATP = UDP-N-acetyl-alpha-D-muramoyl-L-alanyl-gamma-D-glutamyl-L-lysine + ADP + phosphate + H(+). The protein operates within cell wall biogenesis; peptidoglycan biosynthesis. Catalyzes the addition of L-lysine to the nucleotide precursor UDP-N-acetylmuramoyl-L-alanyl-D-glutamate (UMAG) in the biosynthesis of bacterial cell-wall peptidoglycan. This Streptococcus thermophilus (strain ATCC BAA-491 / LMD-9) protein is UDP-N-acetylmuramoyl-L-alanyl-D-glutamate--L-lysine ligase.